The chain runs to 449 residues: GTPase Der (449 aa).

EngA-type G domains lie at 4 to 174 (PIVA…PPKT) and 183 to 358 (LRVA…AQRQ). Residues 10–17 (GRPNVGKS), 57–61 (DTAGL), 126–129 (NKCD), 189–196 (GRPNVGKS), 236–240 (DTAGI), and 301–304 (NKWD) contribute to the GTP site. In terms of domain architecture, KH-like spans 359 to 444 (KRIPTSELNN…PIVIVFRSRE (86 aa)).

It belongs to the TRAFAC class TrmE-Era-EngA-EngB-Septin-like GTPase superfamily. EngA (Der) GTPase family. In terms of assembly, associates with the 50S ribosomal subunit.

In terms of biological role, GTPase that plays an essential role in the late steps of ribosome biogenesis. The polypeptide is GTPase Der (Chloroflexus aggregans (strain MD-66 / DSM 9485)).